We begin with the raw amino-acid sequence, 293 residues long: Acetylglutamate kinase (293 aa).

Substrate contacts are provided by residues glycine 68 to glycine 69, arginine 90, and asparagine 189.

The protein belongs to the acetylglutamate kinase family. ArgB subfamily.

Its subcellular location is the cytoplasm. It carries out the reaction N-acetyl-L-glutamate + ATP = N-acetyl-L-glutamyl 5-phosphate + ADP. The protein operates within amino-acid biosynthesis; L-arginine biosynthesis; N(2)-acetyl-L-ornithine from L-glutamate: step 2/4. Its function is as follows. Catalyzes the ATP-dependent phosphorylation of N-acetyl-L-glutamate. This chain is Acetylglutamate kinase, found in Mycobacterium ulcerans (strain Agy99).